Here is a 348-residue protein sequence, read N- to C-terminus: Phosphoribosylformylglycinamidine cyclo-ligase (348 aa).

This sequence belongs to the AIR synthase family.

The protein localises to the cytoplasm. It catalyses the reaction 2-formamido-N(1)-(5-O-phospho-beta-D-ribosyl)acetamidine + ATP = 5-amino-1-(5-phospho-beta-D-ribosyl)imidazole + ADP + phosphate + H(+). The protein operates within purine metabolism; IMP biosynthesis via de novo pathway; 5-amino-1-(5-phospho-D-ribosyl)imidazole from N(2)-formyl-N(1)-(5-phospho-D-ribosyl)glycinamide: step 2/2. The protein is Phosphoribosylformylglycinamidine cyclo-ligase of Sorangium cellulosum (strain So ce56) (Polyangium cellulosum (strain So ce56)).